The primary structure comprises 1220 residues: Post-transcriptional regulator MKT1L (1220 aa).

The interval 1–107 (MRKAGANRNN…SPWNSPPQQT (107 aa)) is disordered. Basic residues predominate over residues 34–70 (PHHHQHQHHHQHQHQHQHQHQHPHQHPHQHHHHHPHH).

Belongs to the XPG/RAD2 endonuclease family. Forms a complex composed of at least MKT1L, PBP1, XAC1 and LSM12.

It is found in the cytoplasm. Involved in post-transcriptional regulation of gene expression. In Trypanosoma brucei brucei (strain 927/4 GUTat10.1), this protein is Post-transcriptional regulator MKT1L.